The chain runs to 370 residues: Keratin-associated protein 10-7 (370 aa).

Residues 36-363 (DCPESCCEPP…CSRPACCGPT (328 aa)) are 30 X 5 AA repeats of C-C-X(3). 30 repeat units span residues 41–45 (CCEPP), 46–50 (CCAPA), 67–71 (CCRVT), 89–93 (CCQQS), 99–103 (CCASS), 109–113 (CCVPV), 114–118 (CCKTV), 119–123 (CCKPV), 135–139 (CCQQS), 145–149 (CCTSS), 155–159 (CCVPI), 160–164 (CCKPV), 172–176 (CCQQS), 186–190 (CCQAV), 208–212 (CCQQS), 218–222 (CCTSS), 228–232 (CCVPV), 233–237 (CCKPV), 238–242 (CCVPT), 250–254 (CCQPA), 255–259 (CCTSS), 265–269 (CCVPV), 270–274 (CCKPV), 275–279 (CCVPV), 287–291 (CCQQS), 297–301 (CCTTS), 302–306 (CCRPS), 321–325 (CCVPV), 339–343 (CCRPA), and 359–363 (CCGPT).

This sequence belongs to the KRTAP type 10 family. Interacts with hair keratins. Restricted to a narrow region of the hair fiber cuticle, lying approximately 20 cell layers above the apex of the dermal papilla of the hair root; not detected in any other tissues.

In terms of biological role, in the hair cortex, hair keratin intermediate filaments are embedded in an interfilamentous matrix, consisting of hair keratin-associated proteins (KRTAP), which are essential for the formation of a rigid and resistant hair shaft through their extensive disulfide bond cross-linking with abundant cysteine residues of hair keratins. The matrix proteins include the high-sulfur and high-glycine-tyrosine keratins. The protein is Keratin-associated protein 10-7 (KRTAP10-7) of Homo sapiens (Human).